The primary structure comprises 143 residues: Anti-sigma F factor (143 aa).

It belongs to the anti-sigma-factor family.

It catalyses the reaction L-seryl-[protein] + ATP = O-phospho-L-seryl-[protein] + ADP + H(+). The enzyme catalyses L-threonyl-[protein] + ATP = O-phospho-L-threonyl-[protein] + ADP + H(+). Its function is as follows. Binds to sigma F and blocks its ability to form an RNA polymerase holoenzyme (E-sigma F). Phosphorylates SpoIIAA on a serine residue. This phosphorylation may enable SpoIIAA to act as an anti-anti-sigma factor that counteracts SpoIIAB and thus releases sigma F from inhibition. This is Anti-sigma F factor from Caldanaerobacter subterraneus subsp. tengcongensis (strain DSM 15242 / JCM 11007 / NBRC 100824 / MB4) (Thermoanaerobacter tengcongensis).